The sequence spans 474 residues: tRNA-2-methylthio-N(6)-dimethylallyladenosine synthase (474 aa).

Residues 3-120 (KKLHIKTWGC…LPEMINSVRG (118 aa)) form the MTTase N-terminal domain. [4Fe-4S] cluster-binding residues include Cys12, Cys49, Cys83, Cys157, Cys161, and Cys164. A Radical SAM core domain is found at 143–375 (RAEGPTAFVS…QERINQQAMA (233 aa)). The region spanning 378–441 (RRMLGTVQRI…TNSLRGKVVR (64 aa)) is the TRAM domain.

Belongs to the methylthiotransferase family. MiaB subfamily. Monomer. Requires [4Fe-4S] cluster as cofactor.

The protein resides in the cytoplasm. It catalyses the reaction N(6)-dimethylallyladenosine(37) in tRNA + (sulfur carrier)-SH + AH2 + 2 S-adenosyl-L-methionine = 2-methylsulfanyl-N(6)-dimethylallyladenosine(37) in tRNA + (sulfur carrier)-H + 5'-deoxyadenosine + L-methionine + A + S-adenosyl-L-homocysteine + 2 H(+). In terms of biological role, catalyzes the methylthiolation of N6-(dimethylallyl)adenosine (i(6)A), leading to the formation of 2-methylthio-N6-(dimethylallyl)adenosine (ms(2)i(6)A) at position 37 in tRNAs that read codons beginning with uridine. This Citrobacter koseri (strain ATCC BAA-895 / CDC 4225-83 / SGSC4696) protein is tRNA-2-methylthio-N(6)-dimethylallyladenosine synthase.